The sequence spans 110 residues: UPF0145 protein LMOf2365_0219 (110 aa).

Belongs to the UPF0145 family.

The protein is UPF0145 protein LMOf2365_0219 of Listeria monocytogenes serotype 4b (strain F2365).